The sequence spans 583 residues: Estrogen receptor (583 aa).

The segment at 1-138 (MYPEESRGSG…GFEITKNTRF (138 aa)) is modulating. 2 NR C4-type zinc fingers span residues 139-159 (CAVC…CEGC) and 175-199 (CPAT…LRKC). Residues 139-204 (CAVCSDYASG…RLRKCYEVGM (66 aa)) constitute a DNA-binding region (nuclear receptor). Positions 205–265 (MKGGMRKDRG…PGGRSSLNNM (61 aa)) are hinge. The tract at residues 220-263 (EKHGPAQRQTSQNLPTHKASPQDGRKRAMSSSSTSGPGGRSSLN) is disordered. Positions 266-501 (PPDQVLLLLQ…DLLLEMLDAH (236 aa)) constitute an NR LBD domain. Residues 506–583 (PVKPSQSWSQ…GSHSDCTRIP (78 aa)) form a disordered region. Low complexity predominate over residues 539–551 (ASSAGSSSGPQGS).

It belongs to the nuclear hormone receptor family. NR3 subfamily. Binds DNA as a homodimer. Can form a heterodimer with ER-beta.

The protein localises to the nucleus. Its function is as follows. The steroid hormones and their receptors are involved in the regulation of eukaryotic gene expression and affect cellular proliferation and differentiation in target tissues. This is Estrogen receptor (esr1) from Oreochromis aureus (Israeli tilapia).